A 297-amino-acid chain; its full sequence is MENGNGEGKGEFINQNNDFFLDSMSMLSSLPPCWDPSLPPPPPPPQSLFHALAVDAPFPDQFHHPQESGGPTMGSQEGLQPQGTVSTTSAPVVRQKPRVRARRGQATDPHSIAERLRRERIAERMKSLQELVPNTNKTDKASMLDEIIEYVRFLQLQVKVLSMSRLGGAGSVGPRLNGLSAEAGGRLNALTAPCNGLNGNGNATGSSNESLRSTEQRVAKLMEEDMGSAMQYLQGKGLCLMPISLATAISSSTTHSRGSLFNPISSAVAAEDSNVTATAVAAPEASSTMDDVSASKA.

The tract at residues 59–109 is disordered; it reads PDQFHHPQESGGPTMGSQEGLQPQGTVSTTSAPVVRQKPRVRARRGQATDP. Polar residues predominate over residues 73–90; sequence MGSQEGLQPQGTVSTTSA. The interval 105–118 is basic motif; degenerate; sequence QATDPHSIAERLRR. The 50-residue stretch at 105–154 folds into the bHLH domain; sequence QATDPHSIAERLRRERIAERMKSLQELVPNTNKTDKASMLDEIIEYVRFL. The tract at residues 119 to 154 is helix-loop-helix motif; the sequence is ERIAERMKSLQELVPNTNKTDKASMLDEIIEYVRFL.

In terms of assembly, homodimer. In terms of tissue distribution, expressed in trichomes of the root maturation zone. Detected constitutively in flowers.

The protein resides in the nucleus. Transcription factor that regulates the development of root hairs. Does not seem to be involved in the regulation of sperm cell development. The polypeptide is Transcription factor LRL3 (Arabidopsis thaliana (Mouse-ear cress)).